Consider the following 208-residue polypeptide: Receptor expression-enhancing protein 6 (208 aa).

The next 3 helical transmembrane spans lie at 49–69 (GAFL…GFVY), 93–113 (WVIY…LHWF), and 115–135 (FYYV…SWNG). A disordered region spans residues 187–208 (VGPAESEPRSLPSSAHTEPTVD). The segment covering 197-208 (LPSSAHTEPTVD) has biased composition (polar residues).

The protein belongs to the DP1 family.

The protein resides in the endoplasmic reticulum membrane. It is found in the cytoplasmic vesicle. It localises to the clathrin-coated vesicle membrane. Required correct function and survival of retinal photoreceptors. Required for retinal development. In rod photoreceptors, facilitates stability and/or trafficking of guanylate cyclases and is required to maintain endoplasmic reticulum and mitochondrial homeostasis. May play a role in clathrin-coated intracellular vesicle trafficking of proteins from the endoplasmic reticulum to the retinal rod plasma membrane. The sequence is that of Receptor expression-enhancing protein 6 from Danio rerio (Zebrafish).